We begin with the raw amino-acid sequence, 83 residues long: Mu-theraphotoxin-Hhn2j 3 (83 aa).

Residues 1 to 21 form the signal peptide; that stretch reads MKALMFLALAGLVLLFVVGYA. The propeptide occupies 22-48; it reads SESEEKEFPIELLSKIFAVDVFKGEER. Intrachain disulfides connect C50–C65, C57–C70, and C64–C77. L81 is subject to Leucine amide.

Belongs to the neurotoxin 10 (Hwtx-1) family. 15 (Hntx-3) subfamily. Monomer. Expressed by the venom gland.

Its subcellular location is the secreted. Lethal neurotoxin. Selectively blocks tetrodotoxin-sensitive voltage-gated sodium channels (Nav). Does not affect tetrodotoxin-resistant voltage-gated sodium channels or calcium channels. This Cyriopagopus hainanus (Chinese bird spider) protein is Mu-theraphotoxin-Hhn2j 3.